A 552-amino-acid polypeptide reads, in one-letter code: Mothers against decapentaplegic homolog 4 (552 aa).

The mediates interaction with ZBTB7A stretch occupies residues 1–322; sequence MDNMSITNTP…PISNHPAPEY (322 aa). The region spanning 18 to 142 is the MH1 domain; it reads SIVHSLMCHR…YERVVSPGID (125 aa). N6-acetyllysine is present on lysine 37. The interval 44–69 is required for interaction with TSC22D1; it reads VKKLKEKKDELDSLITAITTNGAHPS. A Zn(2+)-binding site is contributed by cysteine 71. Lysine 113 participates in a covalent cross-link: Glycyl lysine isopeptide (Lys-Gly) (interchain with G-Cter in SUMO2). Residues cysteine 115, cysteine 127, and histidine 132 each coordinate Zn(2+). The tract at residues 167 to 193 is disordered; that stretch reads EGQPSLPTEGHSIQTIQHPPSNRASTE. Positions 177 to 193 are enriched in polar residues; that stretch reads HSIQTIQHPPSNRASTE. An SAD region spans residues 275 to 320; sequence PYTPNLPHHQNGHLQHHPPMPPHPGHYWPVHNELAFQPPISNHPAP. An MH2 domain is found at 323–552; that stretch reads WCSIAYFEMD…MPIADPQPLD (230 aa). N6-acetyllysine is present on residues lysine 428 and lysine 507. Lysine 519 is covalently cross-linked (Glycyl lysine isopeptide (Lys-Gly) (interchain with G-Cter in ubiquitin)).

It belongs to the dwarfin/SMAD family. As to quaternary structure, monomer; in the absence of TGF-beta activation. Heterotrimer; on TGF-beta activation. Heterotrimer composed of two molecules of a C-terminally phosphorylated R-SMAD molecule, SMAD2 or SMAD3, and one molecule of SMAD4 to form the transcriptional active SMAD2/SMAD3-SMAD4 complex. Found in a ternary complex composed of SMAD4, STK11/LKB1 and STK11IP. Found in a complex with SMAD1 and YY1. Identified in a complex that contains at least ZNF451, SMAD2, SMAD3 and SMAD4. Interacts with ATF2, COPS5, DACH1, MSG1, SKI, STK11/LKB1, STK11IP and TRIM33. Associates with ZNF423 or ZNF521 in response to BMP2 leading to activate transcription of BMP target genes. Interacts with USP9X. Interacts with RBPMS. Interacts with WWTR1 (via coiled-coil domain). Interacts with CITED1 and CITED2. Interacts with PDPK1 (via PH domain). Interacts with VPS39; this interaction affects heterodimer formation with SMAD3, but not with SMAD2, and leads to inhibition of SMAD3-dependent transcription activation. Interactions with VPS39 and SMAD2 may be mutually exclusive. Interacts (via MH2 domain) with ZNF451 (via N-terminal zinc-finger domains). Interacts with ZC3H3. Interacts weakly with ZNF8. Interacts with NUP93 and IPO7; translocates SMAD4 to the nucleus through the NPC upon BMP7 stimulation resulting in activation of SMAD4 signaling. Interacts with CREB3L1, the interaction takes place upon TGFB1 induction and SMAD4 acts as a CREB3L1 coactivator to induce the expression of genes involved in the assembly of collagen extracellular matrix. Interacts with DLX1. Interacts with ZBTB7A; the interaction is direct and stimulated by TGFB1. Interacts with CREBBP; the recruitment of this transcriptional coactivator is negatively regulated by ZBTB7A. Interacts with EP300; the interaction with this transcriptional coactivator is negatively regulated by ZBTB7A. Interacts with HDAC1. Interacts (via MH2 domain) with ZMIZ1 (via SP-RING-type domain); in the TGF-beta signaling pathway increases the activity of the SMAD3/SMAD4 transcriptional complex. Interacts (via N-terminus) with TSC22D1. Phosphorylated by PDPK1. Post-translationally, monoubiquitinated on Lys-519 by E3 ubiquitin-protein ligase TRIM33. Monoubiquitination hampers its ability to form a stable complex with activated SMAD2/3 resulting in inhibition of TGF-beta/BMP signaling cascade. Deubiquitination by USP9X restores its competence to mediate TGF-beta signaling.

Its subcellular location is the cytoplasm. The protein localises to the nucleus. Common SMAD (co-SMAD) is the coactivator and mediator of signal transduction by TGF-beta (transforming growth factor). Component of the heterotrimeric SMAD2/SMAD3-SMAD4 complex that forms in the nucleus and is required for the TGF-mediated signaling. Promotes binding of the SMAD2/SMAD4/FAST-1 complex to DNA and provides an activation function required for SMAD1 or SMAD2 to stimulate transcription. Component of the multimeric SMAD3/SMAD4/JUN/FOS complex which forms at the AP1 promoter site; required for synergistic transcriptional activity in response to TGF-beta. Acts synergistically with SMAD1 and YY1 in bone morphogenetic protein (BMP)-mediated cardiac-specific gene expression. Binds to SMAD binding elements (SBEs) (5'-GTCT/AGAC-3') within BMP response element (BMPRE) of cardiac activating regions. May act as a tumor suppressor. Positively regulates PDPK1 kinase activity by stimulating its dissociation from the 14-3-3 protein YWHAQ which acts as a negative regulator. In muscle physiology, plays a central role in the balance between atrophy and hypertrophy. When recruited by MSTN, promotes atrophy response via phosphorylated SMAD2/4. MSTN decrease causes SMAD4 release and subsequent recruitment by the BMP pathway to promote hypertrophy via phosphorylated SMAD1/5/8. This chain is Mothers against decapentaplegic homolog 4 (Smad4), found in Rattus norvegicus (Rat).